The sequence spans 82 residues: Large ribosomal subunit protein bL31B (82 aa).

It belongs to the bacterial ribosomal protein bL31 family. Type B subfamily. As to quaternary structure, part of the 50S ribosomal subunit.

The sequence is that of Large ribosomal subunit protein bL31B from Proteus mirabilis (strain HI4320).